Consider the following 218-residue polypeptide: ATP phosphoribosyltransferase (218 aa).

The protein belongs to the ATP phosphoribosyltransferase family. Short subfamily. In terms of assembly, heteromultimer composed of HisG and HisZ subunits.

It localises to the cytoplasm. It catalyses the reaction 1-(5-phospho-beta-D-ribosyl)-ATP + diphosphate = 5-phospho-alpha-D-ribose 1-diphosphate + ATP. It participates in amino-acid biosynthesis; L-histidine biosynthesis; L-histidine from 5-phospho-alpha-D-ribose 1-diphosphate: step 1/9. Its function is as follows. Catalyzes the condensation of ATP and 5-phosphoribose 1-diphosphate to form N'-(5'-phosphoribosyl)-ATP (PR-ATP). Has a crucial role in the pathway because the rate of histidine biosynthesis seems to be controlled primarily by regulation of HisG enzymatic activity. The polypeptide is ATP phosphoribosyltransferase (Burkholderia mallei (strain ATCC 23344)).